Reading from the N-terminus, the 310-residue chain is tRNA dimethylallyltransferase (310 aa).

Residue 13–20 participates in ATP binding; that stretch reads GPTASGKT. Residue 15 to 20 participates in substrate binding; the sequence is TASGKT. Interaction with substrate tRNA stretches follow at residues 38–41, 162–166, 243–248, and 276–283; these read DSAL, QRLSR, RCVGYR, and KRQITWLR.

It belongs to the IPP transferase family. As to quaternary structure, monomer. Mg(2+) is required as a cofactor.

It catalyses the reaction adenosine(37) in tRNA + dimethylallyl diphosphate = N(6)-dimethylallyladenosine(37) in tRNA + diphosphate. Catalyzes the transfer of a dimethylallyl group onto the adenine at position 37 in tRNAs that read codons beginning with uridine, leading to the formation of N6-(dimethylallyl)adenosine (i(6)A). This chain is tRNA dimethylallyltransferase, found in Vibrio parahaemolyticus serotype O3:K6 (strain RIMD 2210633).